Here is a 208-residue protein sequence, read N- to C-terminus: Putative 3-methyladenine DNA glycosylase (208 aa).

Positions 1-20 (MGRAHTVSRGEDHPPIARSE) are disordered.

The protein belongs to the DNA glycosylase MPG family.

The chain is Putative 3-methyladenine DNA glycosylase from Mesorhizobium japonicum (strain LMG 29417 / CECT 9101 / MAFF 303099) (Mesorhizobium loti (strain MAFF 303099)).